A 431-amino-acid chain; its full sequence is Growth-regulating factor 9 (431 aa).

Residues 24–59 form the QLQ domain; it reads WMKAAQLMEFRMQALVYRYIEAGLRVPHHLVVPIWN. 2 WRC domains span residues 89–133 and 307–351; these read ETEP…LVES and DNEP…VDTT. 4 consecutive short sequence motifs (bipartite nuclear localization signal) follow at residues 94 to 104, 122 to 129, 312 to 322, and 340 to 345; these read RCRRTDGKKWR, RGRKRSRK, and RGMKKK.

This sequence belongs to the GRF family. In terms of assembly, interacts with GIF1. Detected in the shoot apical meristem (SAM) and in young leaf primordium.

Its subcellular location is the nucleus. Functionally, transcription activator that plays a role in the regulation of cell expansion in leaf and cotyledons tissues. Component of a network formed by miR396, the GRFs and their interacting factors (GIFs) acting in the regulation of meristem function, at least partially through the control of cell proliferation. The polypeptide is Growth-regulating factor 9 (GRF9) (Arabidopsis thaliana (Mouse-ear cress)).